Consider the following 649-residue polypeptide: Acetyl-coenzyme A synthetase (649 aa).

CoA contacts are provided by residues 191–194 (RGGR), threonine 311, and asparagine 335. ATP is bound by residues 387–389 (GEP), 411–416 (DTWWQT), aspartate 500, and arginine 515. Serine 523 is a binding site for CoA. Arginine 526 contributes to the ATP binding site. Mg(2+) is bound by residues valine 537, phenylalanine 539, and isoleucine 542. Arginine 584 contributes to the CoA binding site. Lysine 609 bears the N6-acetyllysine mark.

It belongs to the ATP-dependent AMP-binding enzyme family. It depends on Mg(2+) as a cofactor. In terms of processing, acetylated. Deacetylation by the SIR2-homolog deacetylase activates the enzyme.

The enzyme catalyses acetate + ATP + CoA = acetyl-CoA + AMP + diphosphate. Catalyzes the conversion of acetate into acetyl-CoA (AcCoA), an essential intermediate at the junction of anabolic and catabolic pathways. AcsA undergoes a two-step reaction. In the first half reaction, AcsA combines acetate with ATP to form acetyl-adenylate (AcAMP) intermediate. In the second half reaction, it can then transfer the acetyl group from AcAMP to the sulfhydryl group of CoA, forming the product AcCoA. This is Acetyl-coenzyme A synthetase from Vibrio cholerae serotype O1 (strain ATCC 39315 / El Tor Inaba N16961).